We begin with the raw amino-acid sequence, 107 residues long: Integration host factor subunit beta (107 aa).

Residues 76–107 (FVPHFKPGKELRERVDGRAGEPLKADDPDDER) form a disordered region. The span at 82-101 (PGKELRERVDGRAGEPLKAD) shows a compositional bias: basic and acidic residues.

The protein belongs to the bacterial histone-like protein family. Heterodimer of an alpha and a beta chain.

This protein is one of the two subunits of integration host factor, a specific DNA-binding protein that functions in genetic recombination as well as in transcriptional and translational control. This is Integration host factor subunit beta from Burkholderia cenocepacia (strain ATCC BAA-245 / DSM 16553 / LMG 16656 / NCTC 13227 / J2315 / CF5610) (Burkholderia cepacia (strain J2315)).